The following is a 31-amino-acid chain: Cytochrome b6-f complex subunit 6 (31 aa).

Residues 4 to 24 (ITSYFGFLLAALTITSALFIG) form a helical membrane-spanning segment.

Belongs to the PetL family. The 4 large subunits of the cytochrome b6-f complex are cytochrome b6, subunit IV (17 kDa polypeptide, PetD), cytochrome f and the Rieske protein, while the 4 small subunits are PetG, PetL, PetM and PetN. The complex functions as a dimer.

The protein localises to the plastid. It is found in the chloroplast thylakoid membrane. Component of the cytochrome b6-f complex, which mediates electron transfer between photosystem II (PSII) and photosystem I (PSI), cyclic electron flow around PSI, and state transitions. PetL is important for photoautotrophic growth as well as for electron transfer efficiency and stability of the cytochrome b6-f complex. This chain is Cytochrome b6-f complex subunit 6, found in Solanum tuberosum (Potato).